The sequence spans 130 residues: Small ribosomal subunit protein uS8 (130 aa).

Belongs to the universal ribosomal protein uS8 family. Part of the 30S ribosomal subunit. Contacts proteins S5 and S12.

In terms of biological role, one of the primary rRNA binding proteins, it binds directly to 16S rRNA central domain where it helps coordinate assembly of the platform of the 30S subunit. In Shewanella sediminis (strain HAW-EB3), this protein is Small ribosomal subunit protein uS8.